We begin with the raw amino-acid sequence, 200 residues long: ATP-dependent Clp protease proteolytic subunit (200 aa).

Residue Ser-102 is the Nucleophile of the active site. His-127 is a catalytic residue.

Belongs to the peptidase S14 family. As to quaternary structure, fourteen ClpP subunits assemble into 2 heptameric rings which stack back to back to give a disk-like structure with a central cavity, resembling the structure of eukaryotic proteasomes.

The protein localises to the cytoplasm. It carries out the reaction Hydrolysis of proteins to small peptides in the presence of ATP and magnesium. alpha-casein is the usual test substrate. In the absence of ATP, only oligopeptides shorter than five residues are hydrolyzed (such as succinyl-Leu-Tyr-|-NHMec, and Leu-Tyr-Leu-|-Tyr-Trp, in which cleavage of the -Tyr-|-Leu- and -Tyr-|-Trp bonds also occurs).. Its function is as follows. Cleaves peptides in various proteins in a process that requires ATP hydrolysis. Has a chymotrypsin-like activity. Plays a major role in the degradation of misfolded proteins. The sequence is that of ATP-dependent Clp protease proteolytic subunit from Dehalococcoides mccartyi (strain ATCC BAA-2266 / KCTC 15142 / 195) (Dehalococcoides ethenogenes (strain 195)).